The sequence spans 318 residues: Olfactory receptor 2A2 (318 aa).

The Extracellular portion of the chain corresponds to Met-1–Ile-24. The N-linked (GlcNAc...) asparagine glycan is linked to Asn-4. Residues Leu-25–Ile-48 form a helical membrane-spanning segment. Residues Cys-49–Thr-56 lie on the Cytoplasmic side of the membrane. Residues Pro-57 to Pro-78 traverse the membrane as a helical segment. Over Lys-79–Gln-99 the chain is Extracellular. The chain crosses the membrane as a helical span at residues Thr-100–Tyr-119. Over Asp-120–Arg-138 the chain is Cytoplasmic. The helical transmembrane segment at Val-139 to Val-157 threads the bilayer. Topologically, residues His-158–Asn-194 are extracellular. A helical transmembrane segment spans residues Gln-195–Met-218. The Cytoplasmic segment spans residues His-219–Lys-235. Residues Ala-236–Tyr-258 form a helical membrane-spanning segment. Over Met-259–Lys-271 the chain is Extracellular. A helical membrane pass occupies residues Met-272–Leu-291. The Cytoplasmic portion of the chain corresponds to Arg-292–Met-310.

The protein belongs to the G-protein coupled receptor 1 family.

The protein resides in the cell membrane. Its function is as follows. Odorant receptor. In Homo sapiens (Human), this protein is Olfactory receptor 2A2 (OR2A2).